The primary structure comprises 90 residues: Cell division topological specificity factor (90 aa).

It belongs to the MinE family.

Its function is as follows. Prevents the cell division inhibition by proteins MinC and MinD at internal division sites while permitting inhibition at polar sites. This ensures cell division at the proper site by restricting the formation of a division septum at the midpoint of the long axis of the cell. The protein is Cell division topological specificity factor of Brucella abortus (strain S19).